Reading from the N-terminus, the 176-residue chain is NAD(P)H-quinone oxidoreductase subunit 6, chloroplastic (176 aa).

The next 5 helical transmembrane spans lie at 10-30 (FLLV…VLLT), 32-52 (PIYS…FYIP), 61-81 (AQLL…VMFM), 92-112 (LWTV…VSLI), and 152-172 (FFLP…GAIA).

The protein belongs to the complex I subunit 6 family. In terms of assembly, NDH is composed of at least 16 different subunits, 5 of which are encoded in the nucleus.

The protein localises to the plastid. Its subcellular location is the chloroplast thylakoid membrane. The enzyme catalyses a plastoquinone + NADH + (n+1) H(+)(in) = a plastoquinol + NAD(+) + n H(+)(out). It carries out the reaction a plastoquinone + NADPH + (n+1) H(+)(in) = a plastoquinol + NADP(+) + n H(+)(out). In terms of biological role, NDH shuttles electrons from NAD(P)H:plastoquinone, via FMN and iron-sulfur (Fe-S) centers, to quinones in the photosynthetic chain and possibly in a chloroplast respiratory chain. The immediate electron acceptor for the enzyme in this species is believed to be plastoquinone. Couples the redox reaction to proton translocation, and thus conserves the redox energy in a proton gradient. In Platanus occidentalis (Sycamore), this protein is NAD(P)H-quinone oxidoreductase subunit 6, chloroplastic (ndhG).